The sequence spans 281 residues: Bifunctional protein FolD (281 aa).

NADP(+) contacts are provided by residues asparagine 159–serine 161, serine 184, and isoleucine 225.

The protein belongs to the tetrahydrofolate dehydrogenase/cyclohydrolase family. As to quaternary structure, homodimer.

It carries out the reaction (6R)-5,10-methylene-5,6,7,8-tetrahydrofolate + NADP(+) = (6R)-5,10-methenyltetrahydrofolate + NADPH. The catalysed reaction is (6R)-5,10-methenyltetrahydrofolate + H2O = (6R)-10-formyltetrahydrofolate + H(+). It functions in the pathway one-carbon metabolism; tetrahydrofolate interconversion. Functionally, catalyzes the oxidation of 5,10-methylenetetrahydrofolate to 5,10-methenyltetrahydrofolate and then the hydrolysis of 5,10-methenyltetrahydrofolate to 10-formyltetrahydrofolate. The chain is Bifunctional protein FolD from Thermoplasma volcanium (strain ATCC 51530 / DSM 4299 / JCM 9571 / NBRC 15438 / GSS1).